Consider the following 481-residue polypeptide: tRNA-2-methylthio-N(6)-dimethylallyladenosine synthase (481 aa).

Positions 24-140 constitute an MTTase N-terminal domain; it reads KKLFIESYGC…LPNLLAEVEE (117 aa). Residues Cys-33, Cys-69, Cys-103, Cys-178, Cys-182, and Cys-185 each coordinate [4Fe-4S] cluster. Residues 164 to 411 form the Radical SAM core domain; sequence MSNGITALVS…DLQQKHAWFR (248 aa). Positions 413 to 476 constitute a TRAM domain; sequence EEFVGKTVEV…SGTLKGEAVG (64 aa).

Belongs to the methylthiotransferase family. MiaB subfamily. Monomer. [4Fe-4S] cluster serves as cofactor.

It localises to the cytoplasm. It carries out the reaction N(6)-dimethylallyladenosine(37) in tRNA + (sulfur carrier)-SH + AH2 + 2 S-adenosyl-L-methionine = 2-methylsulfanyl-N(6)-dimethylallyladenosine(37) in tRNA + (sulfur carrier)-H + 5'-deoxyadenosine + L-methionine + A + S-adenosyl-L-homocysteine + 2 H(+). Functionally, catalyzes the methylthiolation of N6-(dimethylallyl)adenosine (i(6)A), leading to the formation of 2-methylthio-N6-(dimethylallyl)adenosine (ms(2)i(6)A) at position 37 in tRNAs that read codons beginning with uridine. This is tRNA-2-methylthio-N(6)-dimethylallyladenosine synthase from Flavobacterium johnsoniae (strain ATCC 17061 / DSM 2064 / JCM 8514 / BCRC 14874 / CCUG 350202 / NBRC 14942 / NCIMB 11054 / UW101) (Cytophaga johnsonae).